The primary structure comprises 648 residues: Bifunctional protein TilS/HprT (648 aa).

S29 to S34 contributes to the ATP binding site. Position 627 (D627) interacts with Mg(2+).

This sequence in the N-terminal section; belongs to the tRNA(Ile)-lysidine synthase family. In the C-terminal section; belongs to the purine/pyrimidine phosphoribosyltransferase family. Mg(2+) serves as cofactor.

The protein resides in the cytoplasm. It carries out the reaction IMP + diphosphate = hypoxanthine + 5-phospho-alpha-D-ribose 1-diphosphate. The catalysed reaction is GMP + diphosphate = guanine + 5-phospho-alpha-D-ribose 1-diphosphate. It catalyses the reaction cytidine(34) in tRNA(Ile2) + L-lysine + ATP = lysidine(34) in tRNA(Ile2) + AMP + diphosphate + H(+). In terms of biological role, ligates lysine onto the cytidine present at position 34 of the AUA codon-specific tRNA(Ile) that contains the anticodon CAU, in an ATP-dependent manner. Cytidine is converted to lysidine, thus changing the amino acid specificity of the tRNA from methionine to isoleucine. The sequence is that of Bifunctional protein TilS/HprT (tilS/hprT) from Listeria innocua serovar 6a (strain ATCC BAA-680 / CLIP 11262).